Consider the following 519-residue polypeptide: Probable DNA ligase (519 aa).

Residue E221 participates in ATP binding. The active-site N6-AMP-lysine intermediate is the K223. ATP contacts are provided by R228, R243, E272, F312, R384, and K390.

The protein belongs to the ATP-dependent DNA ligase family. Requires Mg(2+) as cofactor.

It catalyses the reaction ATP + (deoxyribonucleotide)n-3'-hydroxyl + 5'-phospho-(deoxyribonucleotide)m = (deoxyribonucleotide)n+m + AMP + diphosphate.. DNA ligase that seals nicks in double-stranded DNA during DNA replication, DNA recombination and DNA repair. The polypeptide is Probable DNA ligase (Mycolicibacterium paratuberculosis (strain ATCC BAA-968 / K-10) (Mycobacterium paratuberculosis)).